A 370-amino-acid polypeptide reads, in one-letter code: Phosphoserine aminotransferase (370 aa).

N-acetylmethionine is present on methionine 1. O-phospho-L-serine-binding residues include histidine 44 and arginine 45. Lysine 51 is modified (N6-acetyllysine). Pyridoxal 5'-phosphate contacts are provided by glycine 79, cysteine 80, and tryptophan 107. Lysine 127 bears the N6-acetyllysine mark. Pyridoxal 5'-phosphate-binding residues include threonine 156, aspartate 176, and glutamine 199. The residue at position 200 (lysine 200) is an N6-(pyridoxal phosphate)lysine. Residues asparagine 241 and threonine 242 each coordinate pyridoxal 5'-phosphate. 3 positions are modified to N6-acetyllysine: lysine 269, lysine 318, and lysine 323. The residue at position 331 (serine 331) is a Phosphoserine. Residue lysine 333 is modified to N6-acetyllysine. O-phospho-L-serine is bound by residues histidine 335, arginine 336, and arginine 342.

This sequence belongs to the class-V pyridoxal-phosphate-dependent aminotransferase family. SerC subfamily. Homodimer. Requires pyridoxal 5'-phosphate as cofactor.

The enzyme catalyses O-phospho-L-serine + 2-oxoglutarate = 3-phosphooxypyruvate + L-glutamate. It participates in amino-acid biosynthesis; L-serine biosynthesis; L-serine from 3-phospho-D-glycerate: step 2/3. Involved in L-serine biosynthesis via the phosphorylated pathway, a three-step pathway converting the glycolytic intermediate 3-phospho-D-glycerate into L-serine. Catalyzes the second step, that is the pyridoxal 5'-phosphate-dependent transamination of 3-phosphohydroxypyruvate and L-glutamate to O-phosphoserine (OPS) and alpha-ketoglutarate. The protein is Phosphoserine aminotransferase (PSAT1) of Oryctolagus cuniculus (Rabbit).